The chain runs to 376 residues: Deoxyguanosinetriphosphate triphosphohydrolase-like protein (376 aa).

The interval 1 to 32 is disordered; it reads MEPSFAPYAAHSSQTRGRVHREAPAAPRSEFQ. An HD domain is found at 65-196; that stretch reads RLTHSIEVAQ…ANLADEIAYN (132 aa).

The protein belongs to the dGTPase family. Type 2 subfamily.

The chain is Deoxyguanosinetriphosphate triphosphohydrolase-like protein from Thiobacillus denitrificans (strain ATCC 25259 / T1).